We begin with the raw amino-acid sequence, 218 residues long: Ras-related protein RABA1i (218 aa).

20–27 contributes to the GTP binding site; it reads GDSGVGKS. The Effector region motif lies at 42-50; that stretch reads SRATIGVEF. GTP is bound by residues 68–72, 126–129, and 156–157; these read DTAGQ, NKAD, and SA. 2 S-geranylgeranyl cysteine lipidation sites follow: C215 and C216.

Belongs to the small GTPase superfamily. Rab family.

The protein resides in the cell membrane. Functionally, intracellular vesicle trafficking and protein transport. This is Ras-related protein RABA1i (RABA1I) from Arabidopsis thaliana (Mouse-ear cress).